The following is a 134-amino-acid chain: ATP synthase epsilon chain (134 aa).

The protein belongs to the ATPase epsilon chain family. F-type ATPases have 2 components, CF(1) - the catalytic core - and CF(0) - the membrane proton channel. CF(1) has five subunits: alpha(3), beta(3), gamma(1), delta(1), epsilon(1). CF(0) has three main subunits: a, b and c.

It localises to the cell membrane. Produces ATP from ADP in the presence of a proton gradient across the membrane. In Listeria innocua serovar 6a (strain ATCC BAA-680 / CLIP 11262), this protein is ATP synthase epsilon chain.